We begin with the raw amino-acid sequence, 317 residues long: Toluene-4-sulfonate monooxygenase system reductase subunit TsaB1 (317 aa).

The region spanning 2-108 (SADVPVTVAA…RATCSEMAPE (107 aa)) is the FAD-binding FR-type domain. 110–220 (RRVLLLAGGI…PGSVRMERFK (111 aa)) is a binding site for NAD(+). The 2Fe-2S ferredoxin-type domain maps to 230–317 (QPFELVLQRA…CGGGRLVLDI (88 aa)). 4 residues coordinate [2Fe-2S] cluster: Cys266, Cys271, Cys274, and Cys304.

Monomer. Part of the p-toluenesulfonate methyl-monooxygenase complex TsaBM, comprising the reductase TsaB and the oxygenase TsaM. Requires FMN as cofactor.

Functionally, iron-sulfur flavoprotein carrying electrons from NADH to the oxygenase TsaM. Involved in the toluene-4-sulfonate degradation pathway. This Comamonas testosteroni (Pseudomonas testosteroni) protein is Toluene-4-sulfonate monooxygenase system reductase subunit TsaB1 (tsaB1).